The following is a 203-amino-acid chain: E3 ubiquitin-protein ligase rnf152-B (203 aa).

The RING-type zinc finger occupies 12–55 (CQICFNYYSPRRRPKLLDCKHTCCSVCLQQMRASQKDLRCPWCR). Residues 167–187 (SGVCTVILVACVLVFLLGIVL) traverse the membrane as a helical segment.

It belongs to the RNF152 family.

The protein localises to the lysosome membrane. It carries out the reaction S-ubiquitinyl-[E2 ubiquitin-conjugating enzyme]-L-cysteine + [acceptor protein]-L-lysine = [E2 ubiquitin-conjugating enzyme]-L-cysteine + N(6)-ubiquitinyl-[acceptor protein]-L-lysine.. It functions in the pathway protein modification; protein ubiquitination. Its function is as follows. E3 ubiquitin-protein ligase that acts as a negative regulator of mTORC1 signaling by mediating ubiquitination of RagA/RRAGA and RHEB. Catalyzes 'Lys-63'-linked polyubiquitination of RagA/RRAGA in response to amino acid starvation, thereby regulating mTORC1 signaling. Also mediates monoubiquitination of RHEB, promoting its association with the TSC-TBC complex and subsequent inhibition. Also mediates 'Lys-48'-linked polyubiquitination of target proteins and their subsequent targeting to the proteasome for degradation. In Xenopus laevis (African clawed frog), this protein is E3 ubiquitin-protein ligase rnf152-B.